We begin with the raw amino-acid sequence, 107 residues long: uncharacterized protein (107 aa).

The protein resides in the mitochondrion. This is an uncharacterized protein from Arabidopsis thaliana (Mouse-ear cress).